Reading from the N-terminus, the 274-residue chain is Large ribosomal subunit protein uL2 (274 aa).

Disordered stretches follow at residues 28 to 55 and 224 to 274; these read APHAPLLEKKSKSGGRNNNGRITTRHVG and VAMN…RRRK.

This sequence belongs to the universal ribosomal protein uL2 family. Part of the 50S ribosomal subunit. Forms a bridge to the 30S subunit in the 70S ribosome.

Its function is as follows. One of the primary rRNA binding proteins. Required for association of the 30S and 50S subunits to form the 70S ribosome, for tRNA binding and peptide bond formation. It has been suggested to have peptidyltransferase activity; this is somewhat controversial. Makes several contacts with the 16S rRNA in the 70S ribosome. The sequence is that of Large ribosomal subunit protein uL2 from Pseudomonas putida (strain GB-1).